A 306-amino-acid polypeptide reads, in one-letter code: Type 2A encapsulin shell protein SrpI (306 aa).

Belongs to the encapsulin family. Family 2A subfamily. As to quaternary structure, the 24.5 nm encapsulin nanocompartment is formed by 60 subunits; monomers form pentamers which assemble to form shells. There are 12 positively charged pores where the pentamers meet with a minimal pore diameter of 3.7 Angstroms as well 3-fold axis channels and dimer channels.

It localises to the encapsulin nanocompartment. Functionally, shell component of a type 2A encapsulin nanocompartment. Expression in E.coli generates nanocompartments with an average diameter of 25 nm. They can be disassembled by treatment with 6M guanidine hydrochloride and reassembled with cargo. The nanocompartment is probably involved in sulfur metabolism. Probably allows passage of cysteine into its interior; during growth in light the physiological pH is 8-8.4, about 30-54% of free cysteine (charge -1) would be able to pass through the shell. In Synechococcus elongatus (strain ATCC 33912 / PCC 7942 / FACHB-805) (Anacystis nidulans R2), this protein is Type 2A encapsulin shell protein SrpI.